The primary structure comprises 217 residues: Ribonuclease HII (217 aa).

Positions 27 to 216 (SRIAGVDEAG…VKESIREGIC (190 aa)) constitute an RNase H type-2 domain. Positions 33, 34, and 126 each coordinate a divalent metal cation.

The protein belongs to the RNase HII family. Mn(2+) serves as cofactor. Requires Mg(2+) as cofactor.

Its subcellular location is the cytoplasm. It carries out the reaction Endonucleolytic cleavage to 5'-phosphomonoester.. Endonuclease that specifically degrades the RNA of RNA-DNA hybrids. This chain is Ribonuclease HII (rnhB), found in Chlamydia muridarum (strain MoPn / Nigg).